The primary structure comprises 73 residues: MYKAKDLRDQSLEELEATHDESRRKLFELNNEFRSQKKREKPHEMKHTRKDIARLLTVITEKRRENQNQTNQG.

A disordered region spans residues 1 to 20 (MYKAKDLRDQSLEELEATHD).

It belongs to the universal ribosomal protein uL29 family.

The protein is Large ribosomal subunit protein uL29 of Protochlamydia amoebophila (strain UWE25).